Here is a 461-residue protein sequence, read N- to C-terminus: Fumarate hydratase class II (461 aa).

Residues 97–99, 127–130, 137–139, and Thr185 each bind substrate; these read SGT, HPND, and SSN. His186 functions as the Proton donor/acceptor in the catalytic mechanism. Ser316 is an active-site residue. Residues Ser317 and 322-324 each bind substrate; that span reads KVN.

Belongs to the class-II fumarase/aspartase family. Fumarase subfamily. As to quaternary structure, homotetramer.

It localises to the cytoplasm. The enzyme catalyses (S)-malate = fumarate + H2O. Its pathway is carbohydrate metabolism; tricarboxylic acid cycle; (S)-malate from fumarate: step 1/1. In terms of biological role, involved in the TCA cycle. Catalyzes the stereospecific interconversion of fumarate to L-malate. The chain is Fumarate hydratase class II from Staphylococcus aureus (strain MSSA476).